The chain runs to 280 residues: Nucleotide-binding protein CV_3336 (280 aa).

ATP is bound at residue 8-15 (GLSGSGKS). Residue 57-60 (DTRS) coordinates GTP.

The protein belongs to the RapZ-like family.

Functionally, displays ATPase and GTPase activities. This Chromobacterium violaceum (strain ATCC 12472 / DSM 30191 / JCM 1249 / CCUG 213 / NBRC 12614 / NCIMB 9131 / NCTC 9757 / MK) protein is Nucleotide-binding protein CV_3336.